A 361-amino-acid chain; its full sequence is Biotin synthase (361 aa).

Positions 83-308 (PEVEVEGIIS…RTILRYAGGR (226 aa)) constitute a Radical SAM core domain. Positions 98, 102, and 105 each coordinate [4Fe-4S] cluster. Positions 141, 174, 233, and 303 each coordinate [2Fe-2S] cluster.

Belongs to the radical SAM superfamily. Biotin synthase family. As to quaternary structure, homodimer. [4Fe-4S] cluster is required as a cofactor. It depends on [2Fe-2S] cluster as a cofactor.

The enzyme catalyses (4R,5S)-dethiobiotin + (sulfur carrier)-SH + 2 reduced [2Fe-2S]-[ferredoxin] + 2 S-adenosyl-L-methionine = (sulfur carrier)-H + biotin + 2 5'-deoxyadenosine + 2 L-methionine + 2 oxidized [2Fe-2S]-[ferredoxin]. The protein operates within cofactor biosynthesis; biotin biosynthesis; biotin from 7,8-diaminononanoate: step 2/2. Its function is as follows. Catalyzes the conversion of dethiobiotin (DTB) to biotin by the insertion of a sulfur atom into dethiobiotin via a radical-based mechanism. The sequence is that of Biotin synthase from Parafrankia sp. (strain EAN1pec).